A 265-amino-acid chain; its full sequence is MKLKQNIEKEIIKINNIRIHQYTVLYTSNCTIDVYTKEGSNTYLRNELIFLERGINISVRLQKKKSTVNPFIAIRLSSDTLRRLKDALMIIYGISKVDACSCPNWSKGIIVADADDSVLDTFKSIDHNDDSRITSDLIYLISKIENNRKIIESIYISAVSFFSDKVRNTIEKDLSKRWTLAIIADEFNVSEITIRKRLESEYITFNQILMQSRMSKAALLLLDNSYQISQISNMIGFSSTSYFIRLFVKHFGITPKQFLTYFKSQ.

The HTH araC/xylS-type domain maps to aspartate 164 to tyrosine 261. 2 consecutive DNA-binding regions (H-T-H motif) follow at residues alanine 181–tyrosine 202 and isoleucine 228–phenylalanine 251.

In terms of assembly, homodimer.

In terms of biological role, transcriptional activator of aggregative adherence fimbria I expression in enteroaggregative E.coli. This is Transcriptional activator AggR (aggR) from Escherichia coli.